The chain runs to 804 residues: Leucine--tRNA ligase (804 aa).

Positions 39–50 (PFPSGKGLHVGH) match the 'HIGH' region motif. A 'KMSKS' region motif is present at residues 573–577 (KMSKS). Residue Lys576 participates in ATP binding.

The protein belongs to the class-I aminoacyl-tRNA synthetase family.

The protein resides in the cytoplasm. It carries out the reaction tRNA(Leu) + L-leucine + ATP = L-leucyl-tRNA(Leu) + AMP + diphosphate. This Lactobacillus acidophilus (strain ATCC 700396 / NCK56 / N2 / NCFM) protein is Leucine--tRNA ligase.